The sequence spans 190 residues: Glutathione peroxidase 2 (190 aa).

Selenocysteine 40 is a catalytic residue. Position 40 (selenocysteine 40) is a non-standard amino acid, selenocysteine.

It belongs to the glutathione peroxidase family. Homotetramer.

The protein resides in the cytoplasm. It is found in the cytosol. It catalyses the reaction 2 glutathione + H2O2 = glutathione disulfide + 2 H2O. The catalysed reaction is a hydroperoxy polyunsaturated fatty acid + 2 glutathione = a hydroxy polyunsaturated fatty acid + glutathione disulfide + H2O. It carries out the reaction tert-butyl hydroperoxide + 2 glutathione = tert-butanol + glutathione disulfide + H2O. The enzyme catalyses cumene hydroperoxide + 2 glutathione = 2-phenylpropan-2-ol + glutathione disulfide + H2O. It catalyses the reaction (13S)-hydroperoxy-(9Z,11E)-octadecadienoate + 2 glutathione = (13S)-hydroxy-(9Z,11E)-octadecadienoate + glutathione disulfide + H2O. The catalysed reaction is (5S)-hydroperoxy-(6E,8Z,11Z,14Z)-eicosatetraenoate + 2 glutathione = (5S)-hydroxy-(6E,8Z,11Z,14Z)-eicosatetraenoate + glutathione disulfide + H2O. It carries out the reaction (12R)-hydroperoxy-(5Z,8Z,10E,14Z)-eicosatetraenoate + 2 glutathione = (12R)-hydroxy-(5Z,8Z,10E,14Z)-eicosatetraenoate + glutathione disulfide + H2O. The enzyme catalyses (15S)-hydroperoxy-(5Z,8Z,11Z,13E)-eicosatetraenoate + 2 glutathione = (15S)-hydroxy-(5Z,8Z,11Z,13E)-eicosatetraenoate + glutathione disulfide + H2O. Its function is as follows. Catalyzes the reduction of hydroperoxides in a glutathione-dependent manner thus regulating cellular redox homeostasis. Can reduce small soluble hydroperoxides such as H2O2, cumene hydroperoxide and tert-butyl hydroperoxide, as well as several fatty acid-derived hydroperoxides. Cannot reduce phosphatidycholine hydroperoxide. The sequence is that of Glutathione peroxidase 2 (Gpx2) from Mus musculus (Mouse).